The sequence spans 652 residues: DNA ligase (652 aa).

Residues 29–33, 78–79, and Glu-107 each bind NAD(+); these read DSEYD and SL. The active-site N6-AMP-lysine intermediate is Lys-109. Arg-130, Glu-164, Lys-278, and Lys-302 together coordinate NAD(+). Zn(2+) contacts are provided by Cys-395, Cys-398, Cys-413, and Cys-418. The BRCT domain occupies 577-652; the sequence is VADAALSGLT…VRDEAWLESL (76 aa).

This sequence belongs to the NAD-dependent DNA ligase family. LigA subfamily. Requires Mg(2+) as cofactor. The cofactor is Mn(2+).

It carries out the reaction NAD(+) + (deoxyribonucleotide)n-3'-hydroxyl + 5'-phospho-(deoxyribonucleotide)m = (deoxyribonucleotide)n+m + AMP + beta-nicotinamide D-nucleotide.. Functionally, DNA ligase that catalyzes the formation of phosphodiester linkages between 5'-phosphoryl and 3'-hydroxyl groups in double-stranded DNA using NAD as a coenzyme and as the energy source for the reaction. It is essential for DNA replication and repair of damaged DNA. This Streptococcus pneumoniae (strain CGSP14) protein is DNA ligase.